A 311-amino-acid polypeptide reads, in one-letter code: MTGKMKLFSVTSERPLATKIADYLDIPLCEVELQKFSDGEVKINIEESIRGTNAYVVQSMNANVNERLMELLIMVDALKRASVHSINIIMPYYGYARQDRKARSREPITAKLMANLIQRAGANRLITVDLHAAQIQGFFNIPIDHLSAVPLIGDYLIEKYGEEDVVVVAPDHSGVVRARRIADRLNAPIAILNRKPRPHEDEIMSVIGDVKGKVAIVVDDIIDTGVRATTSADILLEKGAVEVIACATHSVMAGDATERLQNSRIKEVITSDSIDLPEEKQFEKLTTISIGRILGRAIEGVQENRSLHPLF.

ATP-binding positions include 38–40 and 97–98; these read DGE and RQ. Mg(2+) contacts are provided by His131 and Asp171. Position 219 (Asp219) interacts with D-ribose 5-phosphate.

The protein belongs to the ribose-phosphate pyrophosphokinase family. Class I subfamily. As to quaternary structure, homohexamer. Mg(2+) serves as cofactor.

The protein resides in the cytoplasm. The enzyme catalyses D-ribose 5-phosphate + ATP = 5-phospho-alpha-D-ribose 1-diphosphate + AMP + H(+). The protein operates within metabolic intermediate biosynthesis; 5-phospho-alpha-D-ribose 1-diphosphate biosynthesis; 5-phospho-alpha-D-ribose 1-diphosphate from D-ribose 5-phosphate (route I): step 1/1. Its function is as follows. Involved in the biosynthesis of the central metabolite phospho-alpha-D-ribosyl-1-pyrophosphate (PRPP) via the transfer of pyrophosphoryl group from ATP to 1-hydroxyl of ribose-5-phosphate (Rib-5-P). The protein is Putative ribose-phosphate pyrophosphokinase 2 of Listeria innocua serovar 6a (strain ATCC BAA-680 / CLIP 11262).